Consider the following 473-residue polypeptide: Cysteine--tRNA ligase (473 aa).

C28 serves as a coordination point for Zn(2+). The 'HIGH' region signature appears at 30 to 40 (VTVYDLCHLGH). Residues C213, H238, and E242 each contribute to the Zn(2+) site. The short motif at 270–274 (KMSKS) is the 'KMSKS' region element. Residue K273 participates in ATP binding.

Belongs to the class-I aminoacyl-tRNA synthetase family. Monomer. Requires Zn(2+) as cofactor.

Its subcellular location is the cytoplasm. It carries out the reaction tRNA(Cys) + L-cysteine + ATP = L-cysteinyl-tRNA(Cys) + AMP + diphosphate. The sequence is that of Cysteine--tRNA ligase from Blochmanniella pennsylvanica (strain BPEN).